The following is a 344-amino-acid chain: Adenosine deaminase (344 aa).

Zn(2+) is bound by residues His14 and His16. Substrate contacts are provided by His16, Asp18, and Gly177. His204 contacts Zn(2+). Glu207 acts as the Proton donor in catalysis. Zn(2+) is bound at residue Asp284.

It belongs to the metallo-dependent hydrolases superfamily. Adenosine and AMP deaminases family. Adenosine deaminase subfamily. It depends on Zn(2+) as a cofactor.

The enzyme catalyses adenosine + H2O + H(+) = inosine + NH4(+). The catalysed reaction is 2'-deoxyadenosine + H2O + H(+) = 2'-deoxyinosine + NH4(+). Catalyzes the hydrolytic deamination of adenosine and 2-deoxyadenosine. The polypeptide is Adenosine deaminase (Haemophilus ducreyi (strain 35000HP / ATCC 700724)).